A 446-amino-acid chain; its full sequence is Cytochrome P450 monooxygenase ptmP (446 aa).

A helical membrane pass occupies residues 19–39 (VTVIWILMALVLLAYLILPNP). Residue cysteine 385 participates in heme binding. Asparagine 430 carries an N-linked (GlcNAc...) asparagine glycan.

The protein belongs to the cytochrome P450 family. Heme is required as a cofactor.

It localises to the membrane. It participates in secondary metabolite biosynthesis. In terms of biological role, cytochrome P450 monooxygenase; part of the gene cluster that mediates the biosynthesis of the indole diterpenes penitrems. The geranylgeranyl diphosphate (GGPP) synthase ptmG catalyzes the first step in penitrem biosynthesis via conversion of farnesyl pyrophosphate and isopentyl pyrophosphate into geranylgeranyl pyrophosphate (GGPP). Condensation of indole-3-glycerol phosphate with GGPP by the prenyl transferase ptmC then forms 3-geranylgeranylindole (3-GGI). Epoxidation by the FAD-dependent monooxygenase ptmM leads to a epoxidized-GGI that is substrate of the terpene cyclase ptmB for cyclization to yield paspaline. Paspaline is subsequently converted to 13-desoxypaxilline by the cytochrome P450 monooxygenase ptmP, the latter being then converted to paxilline by the cytochrome P450 monooxygenase ptmQ. Paxilline is converted to beta-paxitriol via C-10 ketoreduction by the short-chain dehydrogenase ptmH which can be monoprenylated at the C-20 by the indole diterpene prenyltransferase ptmD. A two-step elimination (acetylation and elimination) process performed by the O-acetyltransferase ptmV and ptmI leads to the production of the prenylated form of penijanthine. The FAD-linked oxidoreductase ptmO then converts the prenylated form of penijanthine into PC-M5 which is in turn transformed into PC-M4 by the aromatic dimethylallyltransferase ptmE. Five sequential oxidative transformations performed by the cytochrome P450 monooxygenases ptmK, ptmU, ptmL, ptmN and ptmJ yield the various penitrem compounds. PtmK, ptmU and ptmM are involved in the formation of the key bicyclic ring of penitrem C via the formation of the intermediates secopenitrem D and penitrem D. PtmL catalyzes the epoxidation of penitrem D and C to yield penitrem B and F, respectively. PtmJ catalyzes the last benzylic hydroxylation to convert penitrem B to prenitrem E and penitrem F to penitrem A. The sequence is that of Cytochrome P450 monooxygenase ptmP from Penicillium ochrochloron.